Reading from the N-terminus, the 455-residue chain is Kynurenine 3-monooxygenase (455 aa).

The protein belongs to the aromatic-ring hydroxylase family. KMO subfamily. Requires FAD as cofactor.

It catalyses the reaction L-kynurenine + NADPH + O2 + H(+) = 3-hydroxy-L-kynurenine + NADP(+) + H2O. It functions in the pathway cofactor biosynthesis; NAD(+) biosynthesis; quinolinate from L-kynurenine: step 1/3. Catalyzes the hydroxylation of L-kynurenine (L-Kyn) to form 3-hydroxy-L-kynurenine (L-3OHKyn). Required for synthesis of quinolinic acid. The sequence is that of Kynurenine 3-monooxygenase from Xanthomonas axonopodis pv. citri (strain 306).